A 185-amino-acid chain; its full sequence is Transmembrane protein 252 (185 aa).

Helical transmembrane passes span 8-28 (VLCA…GFFI) and 39-59 (LVVA…GIFW). The interval 125-149 (YTETSLEPQDKDKNDPQPEAPPPYP) is disordered.

It is found in the membrane. The protein is Transmembrane protein 252 (Tmem252) of Rattus norvegicus (Rat).